Consider the following 335-residue polypeptide: Carboxylesterase 1 (335 aa).

Positions 90-92 (HGG) match the Involved in the stabilization of the negatively charged intermediate by the formation of the oxyanion hole motif. Paraoxon-binding positions include 92–93 (GG), Ser169, and Ala170. Ser169 is a catalytic residue. Catalysis depends on residues Asp276 and His306.

This sequence belongs to the 'GDXG' lipolytic enzyme family.

The enzyme catalyses a carboxylic ester + H2O = an alcohol + a carboxylate + H(+). Its activity is regulated as follows. Is inhibited by the organophosphates paraoxon and dimethylchlorophosphate (DMCP). Functionally, carboxylesterase acting on esters with varying acyl chain length. This Actinidia eriantha (Velvet vine) protein is Carboxylesterase 1 (CXE1).